A 438-amino-acid chain; its full sequence is Xylose isomerase (438 aa).

Residues His-103 and Asp-106 contribute to the active site. Positions 234, 270, 273, 298, 309, 311, and 341 each coordinate Mg(2+).

The protein belongs to the xylose isomerase family. In terms of assembly, homotetramer. Mg(2+) serves as cofactor.

Its subcellular location is the cytoplasm. The enzyme catalyses alpha-D-xylose = alpha-D-xylulofuranose. The chain is Xylose isomerase from Phocaeicola vulgatus (strain ATCC 8482 / DSM 1447 / JCM 5826 / CCUG 4940 / NBRC 14291 / NCTC 11154) (Bacteroides vulgatus).